A 356-amino-acid chain; its full sequence is UDP-N-acetylglucosamine--N-acetylmuramyl-(pentapeptide) pyrophosphoryl-undecaprenol N-acetylglucosamine transferase (356 aa).

Ser198 and Gln289 together coordinate UDP-N-acetyl-alpha-D-glucosamine.

It belongs to the glycosyltransferase 28 family. MurG subfamily.

The protein resides in the cell membrane. It catalyses the reaction Mur2Ac(oyl-L-Ala-gamma-D-Glu-L-Lys-D-Ala-D-Ala)-di-trans,octa-cis-undecaprenyl diphosphate + UDP-N-acetyl-alpha-D-glucosamine = beta-D-GlcNAc-(1-&gt;4)-Mur2Ac(oyl-L-Ala-gamma-D-Glu-L-Lys-D-Ala-D-Ala)-di-trans,octa-cis-undecaprenyl diphosphate + UDP + H(+). It participates in cell wall biogenesis; peptidoglycan biosynthesis. Its function is as follows. Cell wall formation. Catalyzes the transfer of a GlcNAc subunit on undecaprenyl-pyrophosphoryl-MurNAc-pentapeptide (lipid intermediate I) to form undecaprenyl-pyrophosphoryl-MurNAc-(pentapeptide)GlcNAc (lipid intermediate II). This Streptococcus thermophilus (strain CNRZ 1066) protein is UDP-N-acetylglucosamine--N-acetylmuramyl-(pentapeptide) pyrophosphoryl-undecaprenol N-acetylglucosamine transferase.